We begin with the raw amino-acid sequence, 263 residues long: Isoprenyl transferase (263 aa).

The active site involves D38. D38 is a binding site for Mg(2+). Residues 39 to 42 (GNRR), H55, and 83 to 85 (STD) each bind substrate. N86 (proton acceptor) is an active-site residue. Residues F87, R89, R212, and 218 to 220 (RLS) each bind substrate. E231 provides a ligand contact to Mg(2+).

The protein belongs to the UPP synthase family. Homodimer. Mg(2+) is required as a cofactor.

Functionally, catalyzes the condensation of isopentenyl diphosphate (IPP) with allylic pyrophosphates generating different type of terpenoids. The chain is Isoprenyl transferase from Thermus thermophilus (strain ATCC BAA-163 / DSM 7039 / HB27).